Here is a 2083-residue protein sequence, read N- to C-terminus: Centriole proteome protein 16 (2083 aa).

Residues 205 to 333 are disordered; the sequence is DAPTMDFMPP…PAVPPPLSPS (129 aa). Residues 227–245 are compositionally biased toward low complexity; it reads TAETADTAGAAGRKSLSGA. Over residues 246–258 the composition is skewed to gly residues; sequence SAGGAGPAKGGAK. Low complexity-rich tracts occupy residues 259 to 274 and 283 to 292; these read AGAAAGGKRAVSSAGA and GSTAGAATPG. Acidic residues predominate over residues 302–315; it reads GEEDFEDDLSEDLD. Pro residues predominate over residues 319 to 331; it reads PLPPSPAVPPPLS. WD repeat units lie at residues 482–523, 526–569, 579–620, 689–726, 728–767, 770–809, 812–853, 856–895, 990–1029, and 1041–1079; these read GHTA…CLAI, AHAS…AAGG, ATEY…GTSV, LHAAAINCLVVSDGLVLTGGDDRLLRAWPLDFRDYLLE, EHEGAVTGLAMSTDALRLAVGTENGTLGVLAIPTHAYTTL, SHCGAVNAVAVDPNRDQYCTVSSDGTLRIWHLATHQQLYE, APGE…LLQE, QHRAGITELLFSPGGDRLFSGGADGALVVYDTARMYAPAQ, VSPLELTALCLDPAGRYAATAGADGLLRLWGCVPLPALRG, and GHPSAILGAAFHRSGYLVTVGDADCVCVWRVNADHMQQE. Disordered regions lie at residues 1113–1141 and 1225–1276; these read HTQATGALDPTDPRSRAHPSTALGPVASA and ALVV…PPPP. The span at 1263-1276 shows a compositional bias: pro residues; it reads VPLPPSPQPLPPPP. 7 WD repeats span residues 1326–1365, 1403–1444, 1448–1486, 1497–1539, 1651–1691, 1736–1781, and 1785–1824; these read GHNRPLSCLAASPDGALVAAGPAAAEPAFTEPAAGARAAQ, YHPL…LVAA, EQSPRAAAWLWGGHNPAFATAGADGLLLWTLQDNFLEQR, RDPR…QPPQ, GQAA…AEPA, DPLD…QLSW, and RHPAPVVGVAPHPRRGLVLSASSDGSLAVTDLSSTRLVSY. Residues 1713-1743 are disordered; the sequence is APAHTLRHPPSAAPSSAASSSPLDPLDPLPA. Positions 1720-1743 are enriched in low complexity; sequence HPPSAAPSSAASSSPLDPLDPLPA. The disordered stretch occupies residues 1832–1870; sequence GPTPHSPGGTGRRSPRGAASPPPAPPRPGTGPLQAMAVS. Positions 1851–1860 are enriched in pro residues; sequence SPPPAPPRPG. The WD 18 repeat unit spans residues 2035–2073; sequence GHAGAVAAASYTGDGGHAVTASGSVLMVWDAAQLLKGVT.

Belongs to the WD repeat WDR90/POC16 family.

Its subcellular location is the cytoplasm. It localises to the cytoskeleton. It is found in the microtubule organizing center. The protein resides in the centrosome. The protein localises to the centriole. Functionally, required for flagellum assembly and/or maintenance. This Chlamydomonas reinhardtii (Chlamydomonas smithii) protein is Centriole proteome protein 16.